Reading from the N-terminus, the 405-residue chain is S-adenosylmethionine:tRNA ribosyltransferase-isomerase (405 aa).

It belongs to the QueA family. In terms of assembly, monomer.

The protein resides in the cytoplasm. The catalysed reaction is 7-aminomethyl-7-carbaguanosine(34) in tRNA + S-adenosyl-L-methionine = epoxyqueuosine(34) in tRNA + adenine + L-methionine + 2 H(+). Its pathway is tRNA modification; tRNA-queuosine biosynthesis. Functionally, transfers and isomerizes the ribose moiety from AdoMet to the 7-aminomethyl group of 7-deazaguanine (preQ1-tRNA) to give epoxyqueuosine (oQ-tRNA). The polypeptide is S-adenosylmethionine:tRNA ribosyltransferase-isomerase (Psychrobacter cryohalolentis (strain ATCC BAA-1226 / DSM 17306 / VKM B-2378 / K5)).